The sequence spans 219 residues: Pollen-specific protein SF3 (219 aa).

LIM zinc-binding domains are found at residues 9 to 109 (QKCT…TRDK) and 110 to 167 (CNAC…QLFK). The segment at 181–219 (VAAPAESETQNTETQNAETQNADTQNADTQNTETQNGSV) is disordered. Positions 185–202 (AESETQNTETQNAETQNA) are enriched in low complexity. Over residues 203-219 (DTQNADTQNTETQNGSV) the composition is skewed to polar residues.

In terms of tissue distribution, pollen.

Its function is as follows. Could possibly involved in controlling pollen-specific processes such as male gamete maturation, pollen tube formation, or even fertilization. The chain is Pollen-specific protein SF3 (SF3) from Helianthus annuus (Common sunflower).